The chain runs to 185 residues: Small ribosomal subunit protein bS16 (185 aa).

Residues 83 to 185 are disordered; the sequence is QWTHGNNPEK…APASEETTEG (103 aa). A compositionally biased stretch (basic and acidic residues) spans 89-125; it reads NPEKAKPGKKAQERDAERTQRDADRVAAEAQAKEDAK. Low complexity-rich tracts occupy residues 126–146 and 159–176; these read AAAA…AAAP and VEAA…AEEA.

This sequence belongs to the bacterial ribosomal protein bS16 family.

The sequence is that of Small ribosomal subunit protein bS16 from Caulobacter sp. (strain K31).